Here is a 373-residue protein sequence, read N- to C-terminus: 2-oxoglutarate oxidoreductase subunit KorB (373 aa).

Residues 26-50 (TPSLTKNAGVPTTDQPQKGKDFTSD) form a disordered region. Residues 27-41 (PSLTKNAGVPTTDQP) are compositionally biased toward polar residues.

KG oxidoreductase (KOR) is composed of KorA and KorB subunits. Mg(2+) is required as a cofactor.

It carries out the reaction 2 oxidized [2Fe-2S]-[ferredoxin] + 2-oxoglutarate + CoA = succinyl-CoA + 2 reduced [2Fe-2S]-[ferredoxin] + CO2 + H(+). The protein operates within carbohydrate metabolism; tricarboxylic acid cycle. In terms of biological role, component of KG oxidoreductase (KOR) that catalyzes the CoA-dependent oxidative decarboxylation of 2-oxoglutarate (alpha-ketoglutarate, KG) to succinyl-CoA. Methyl viologen can act as electron acceptor in vitro; the physiologic electron acceptor is unknown. Is involved in the alternative TCA pathway that functions concurrently with fatty acid beta-oxidation. Since a growing body of evidence indicates that lipids (for example cholesterol and fatty acids) are a predominant growth substrate for M.tuberculosis during infection, flux through KOR likely represents an important step in intermediary metabolism in vivo. KOR-dependent decarboxylation of KG also appears to be an important source of CO(2) in M.tuberculosis metabolism. The sequence is that of 2-oxoglutarate oxidoreductase subunit KorB (korB) from Mycobacterium tuberculosis (strain ATCC 25618 / H37Rv).